Reading from the N-terminus, the 481-residue chain is Sterol 14-alpha demethylase (481 aa).

Residues 1–21 (MFIEAIVLALTALILYSVYSV) traverse the membrane as a helical segment. Heme is bound at residue Cys422.

Belongs to the cytochrome P450 family. Requires heme as cofactor.

The protein localises to the membrane. The enzyme catalyses a 14alpha-methyl steroid + 3 reduced [NADPH--hemoprotein reductase] + 3 O2 = a Delta(14) steroid + formate + 3 oxidized [NADPH--hemoprotein reductase] + 4 H2O + 4 H(+). It functions in the pathway steroid biosynthesis; zymosterol biosynthesis; zymosterol from lanosterol: step 1/6. Catalyzes C14-demethylation of lanosterol which is critical for ergosterol biosynthesis. It transforms lanosterol into 4,4'-dimethyl cholesta-8,14,24-triene-3-beta-ol. Favors C4 dimethylated substrates, the substrate preference order is 24-methylenedihydrolanosterol &gt; 24,25-dihydrolanosterol &gt; lanosterol &gt; obtusifoliol &gt; norlanosterol. The polypeptide is Sterol 14-alpha demethylase (Trypanosoma cruzi (strain CL Brener)).